Consider the following 219-residue polypeptide: Proteasome subunit beta type-9 (219 aa).

Positions 1-20 (MLRAGAPTAGSFRTEEVHTG) are cleaved as a propeptide — removed in mature form. Thr21 functions as the Nucleophile in the catalytic mechanism. N6-acetyllysine is present on residues Lys53 and Lys109.

It belongs to the peptidase T1B family. As to quaternary structure, the 26S proteasome consists of a 20S proteasome core and two 19S regulatory subunits. The 20S proteasome core is composed of 28 subunits that are arranged in four stacked rings, resulting in a barrel-shaped structure. The two end rings are each formed by seven alpha subunits, and the two central rings are each formed by seven beta subunits. The catalytic chamber with the active sites is on the inside of the barrel. Component of the immunoproteasome, where it displaces the equivalent housekeeping subunit PSMB6. Component of the spermatoproteasome, a form of the proteasome specifically found in testis. Autocleaved. The resulting N-terminal Thr residue of the mature subunit is responsible for the nucleophile proteolytic activity.

The protein resides in the cytoplasm. It is found in the nucleus. It carries out the reaction Cleavage of peptide bonds with very broad specificity.. Functionally, the proteasome is a multicatalytic proteinase complex which is characterized by its ability to cleave peptides with Arg, Phe, Tyr, Leu, and Glu adjacent to the leaving group at neutral or slightly basic pH. The proteasome has an ATP-dependent proteolytic activity. This subunit is involved in antigen processing to generate class I binding peptides. The polypeptide is Proteasome subunit beta type-9 (Psmb9) (Mus musculus bactrianus (Southwestern Asian house mouse)).